Reading from the N-terminus, the 381-residue chain is cAMP-dependent protein kinase type I-beta regulatory subunit (381 aa).

Positions 2–136 (ASPPACPSEE…ALAKAISKNV (135 aa)) are dimerization and phosphorylation. At Ser-3 the chain carries Phosphoserine. At Tyr-21 the chain carries 3'-nitrotyrosine. The tract at residues 67–98 (ARQKSNSQSDSHDEEVSPTPPNPVVKARRRRG) is disordered. Phosphoserine occurs at positions 77 and 83. Thr-85 bears the Phosphothreonine mark. The Pseudophosphorylation motif signature appears at 96–100 (RRGGV). The residue at position 97 (Arg-97) is an Omega-N-methylarginine. Residues 137-254 (LFAH…SKVS), Glu-202, Arg-211, 255-381 (ILES…SLTV), Glu-326, and Arg-335 contribute to the 3',5'-cyclic AMP site.

Belongs to the cAMP-dependent kinase regulatory chain family. As to quaternary structure, the inactive holoenzyme is composed of two regulatory chains and two catalytic chains. Activation by cAMP releases the two active catalytic monomers and the regulatory dimer. Interacts with PRKX; regulates this cAMP-dependent protein kinase. Interacts with C2orf88/smAKAP; this interaction may target PRKAR1B to the plasma membrane. The pseudophosphorylation site binds to the substrate-binding region of the catalytic chain, resulting in the inhibition of its activity. As to expression, four types of regulatory chains are found: I-alpha, I-beta, II-alpha, and II-beta. Their expression varies among tissues and is in some cases constitutive and in others inducible.

The protein resides in the cell membrane. In terms of biological role, regulatory subunit of the cAMP-dependent protein kinases involved in cAMP signaling in cells. The chain is cAMP-dependent protein kinase type I-beta regulatory subunit (PRKAR1B) from Homo sapiens (Human).